Here is a 169-residue protein sequence, read N- to C-terminus: S-ribosylhomocysteine lyase (169 aa).

3 residues coordinate Fe cation: H54, H58, and C128.

Belongs to the LuxS family. Homodimer. Requires Fe cation as cofactor.

The enzyme catalyses S-(5-deoxy-D-ribos-5-yl)-L-homocysteine = (S)-4,5-dihydroxypentane-2,3-dione + L-homocysteine. Involved in the synthesis of autoinducer 2 (AI-2) which is secreted by bacteria and is used to communicate both the cell density and the metabolic potential of the environment. The regulation of gene expression in response to changes in cell density is called quorum sensing. Catalyzes the transformation of S-ribosylhomocysteine (RHC) to homocysteine (HC) and 4,5-dihydroxy-2,3-pentadione (DPD). This is S-ribosylhomocysteine lyase from Shewanella sp. (strain MR-7).